The primary structure comprises 71 residues: Protein PSY2 (71 aa).

An N-terminal signal peptide occupies residues 1-20; the sequence is MSFGTRLLLFLILTLPLVTS. A propeptide spanning residues 21 to 46 is cleaved from the precursor; that stretch reads SSPNTLHVSGIVKTGTTSRFLMMTIE. Tyr48 carries the post-translational modification Sulfotyrosine. Residues 50 to 71 are disordered; sequence DPSANTRHDPSVPTNAKADTTP. Positions 61–71 are enriched in polar residues; that stretch reads VPTNAKADTTP. 4-hydroxyproline is present on Pro62. An O-linked (Ara...) hydroxyproline glycan is attached at Pro62. The propeptide occupies 65 to 71; the sequence is AKADTTP.

The protein belongs to the sulfated-peptide plant hormone family. In terms of processing, the sulfation and the glycosylation are required for full activity.

Its subcellular location is the secreted. Functionally, promotes cellular proliferation and expansion. This is Protein PSY2 (PSY2) from Arabidopsis thaliana (Mouse-ear cress).